Here is a 445-residue protein sequence, read N- to C-terminus: Arginine/agmatine antiporter (445 aa).

The Cytoplasmic segment spans residues 1–9; the sequence is MSSDADAHK. A helical transmembrane segment spans residues 10–30; sequence VGLIPVTLMVSGNIMGSGVFL. I23 is a binding site for agmatine. L-arginine is bound by residues I23 and S26. The Periplasmic portion of the chain corresponds to 31–38; sequence LPANLAAT. Residues 39-59 traverse the membrane as a helical segment; sequence GGIAIYGWLVTIIGALALSMV. Residues 60–98 are Cytoplasmic-facing; the sequence is YAKMSSLDPSPGGSYAYARRCFGPFLGYQTNVLYWLACW. Residues A96, C97, and N101 each coordinate agmatine. A96 lines the L-arginine pocket. A helical membrane pass occupies residues 99–119; it reads IGNIAMVVIGVGYLSYFFPIL. The Periplasmic portion of the chain corresponds to 120-122; that stretch reads KDP. Residues 123 to 143 traverse the membrane as a helical segment; that stretch reads LVLTLTCVAVLWIFVLLNIVG. Over 144–152 the chain is Cytoplasmic; it reads PKMITRVQA. The chain crosses the membrane as a helical span at residues 153–173; that stretch reads VATVLALVPIVGIAVFGWFWF. Residues 174–196 lie on the Periplasmic side of the membrane; it reads KGETYMAAWNVSGMNTFGAIQST. The chain crosses the membrane as a helical span at residues 197-217; that stretch reads LNVTLWSFIGVESASVAAGVV. L-arginine is bound by residues W202 and I205. I205 is a binding site for agmatine. The Cytoplasmic segment spans residues 218–225; the sequence is KNPKRNVP. A helical transmembrane segment spans residues 226–246; that stretch reads IATIGGVLIAAVCYVLSTTAI. Residues 247 to 275 lie on the Periplasmic side of the membrane; that stretch reads MGMIPNAALRVSASPFGDAARMALGDTAG. A helical membrane pass occupies residues 276-296; sequence AIVSFCAAAGCLGSLGGWTLL. W293 is an agmatine binding site. Topologically, residues 297–319 are cytoplasmic; sequence AGQTAKAAADDGLFPPIFARVNK. The chain crosses the membrane as a helical span at residues 320-340; it reads AGTPVAGLLIVGVLMTIFQFS. The Periplasmic segment spans residues 341–355; it reads SMSPNAAKEFGLVSS. The chain crosses the membrane as a helical span at residues 356–376; that stretch reads VSVIFTLVPYLYTCAALLLLG. An L-arginine-binding site is contributed by S357. The Cytoplasmic portion of the chain corresponds to 377–385; that stretch reads HGHFGKARP. A helical transmembrane segment spans residues 386-406; sequence LYLLITFVAFVYCIWAVIGSG. At 407-408 the chain is on the periplasmic side; it reads AK. Residues 409-429 form a helical membrane-spanning segment; that stretch reads EVMWSFVTLMVITALYALNYN. Residues 430–445 are Cytoplasmic-facing; the sequence is RIHKNPYPLDAPVKQD.

The protein belongs to the amino acid-polyamine-organocation (APC) superfamily. Basic amino acid/polyamine antiporter (APA) (TC 2.A.3.2) family. As to quaternary structure, homodimer; each subunit has its own individual transport capacity.

Its subcellular location is the cell inner membrane. It carries out the reaction agmatine(in) + L-arginine(out) = agmatine(out) + L-arginine(in). Functionally, major component of the acid-resistance (AR) system allowing enteric pathogens to survive the acidic environment in the stomach. Exchanges extracellular arginine for its intracellular decarboxylation product agmatine (Agm) thereby expelling intracellular protons. Probably undergoes several conformational states in order to translocate the substrate across the membrane; keeps the substrate accessible to only 1 side of the membrane at a time by opening and closing 3 membrane-internal gates. This is Arginine/agmatine antiporter (adiC) from Salmonella typhi.